The primary structure comprises 99 residues: Acylphosphatase-2 (99 aa).

Ser2 is modified (N-acetylserine). Residues 9–99 (SVDYEVFGRV…LEYSNFSIRY (91 aa)) enclose the Acylphosphatase-like domain. Catalysis depends on residues Arg24 and Asn42. The residue at position 93 (Ser93) is a Phosphoserine.

This sequence belongs to the acylphosphatase family.

It catalyses the reaction an acyl phosphate + H2O = a carboxylate + phosphate + H(+). In terms of biological role, its physiological role is not yet clear. The polypeptide is Acylphosphatase-2 (ACYP2) (Homo sapiens (Human)).